We begin with the raw amino-acid sequence, 648 residues long: Threonine--tRNA ligase (648 aa).

One can recognise a TGS domain in the interval 1 to 61 (MIDIILPDGS…INTATVKAIT (61 aa)). The interval 243–549 (DHRKLGRELE…LIEHYSGKLP (307 aa)) is catalytic. Cys-349, His-400, and His-526 together coordinate Zn(2+).

This sequence belongs to the class-II aminoacyl-tRNA synthetase family. In terms of assembly, homodimer. Zn(2+) is required as a cofactor.

The protein localises to the cytoplasm. It carries out the reaction tRNA(Thr) + L-threonine + ATP = L-threonyl-tRNA(Thr) + AMP + diphosphate + H(+). In terms of biological role, catalyzes the attachment of threonine to tRNA(Thr) in a two-step reaction: L-threonine is first activated by ATP to form Thr-AMP and then transferred to the acceptor end of tRNA(Thr). Also edits incorrectly charged L-seryl-tRNA(Thr). In Orientia tsutsugamushi (strain Ikeda) (Rickettsia tsutsugamushi), this protein is Threonine--tRNA ligase.